Reading from the N-terminus, the 330-residue chain is mRNA-capping enzyme (330 aa).

The active-site N6-GMP-lysine intermediate is the Lys-82.

It belongs to the eukaryotic GTase family. As to quaternary structure, monomer. Requires Mg(2+) as cofactor. It depends on Mn(2+) as a cofactor.

The catalysed reaction is a 5'-end diphospho-ribonucleoside in mRNA + GTP + H(+) = a 5'-end (5'-triphosphoguanosine)-ribonucleoside in mRNA + diphosphate. In terms of biological role, mRNA capping. Transfers a GMP cap onto the end of mRNA that terminates with a 5'-diphosphate tail. This chain is mRNA-capping enzyme, found in Chlorella (PBCV-1).